Consider the following 335-residue polypeptide: Holliday junction branch migration complex subunit RuvB (335 aa).

A large ATPase domain (RuvB-L) region spans residues 4 to 184 (ADRLVSAEVL…FGIVQRLEFY (181 aa)). ATP is bound by residues Ile23, Arg24, Gly65, Lys68, Thr69, Thr70, 131–133 (EDY), Arg174, Tyr184, and Arg221. Thr69 provides a ligand contact to Mg(2+). The segment at 185 to 255 (NVDDLQSIVS…IATRALDMLS (71 aa)) is small ATPAse domain (RuvB-S). Residues 258 to 335 (AAGFDYLDRK…RHFGMVRNQE (78 aa)) form a head domain (RuvB-H) region. 3 residues coordinate DNA: Arg294, Arg313, and Arg318.

It belongs to the RuvB family. As to quaternary structure, homohexamer. Forms an RuvA(8)-RuvB(12)-Holliday junction (HJ) complex. HJ DNA is sandwiched between 2 RuvA tetramers; dsDNA enters through RuvA and exits via RuvB. An RuvB hexamer assembles on each DNA strand where it exits the tetramer. Each RuvB hexamer is contacted by two RuvA subunits (via domain III) on 2 adjacent RuvB subunits; this complex drives branch migration. In the full resolvosome a probable DNA-RuvA(4)-RuvB(12)-RuvC(2) complex forms which resolves the HJ.

It localises to the cytoplasm. It carries out the reaction ATP + H2O = ADP + phosphate + H(+). The RuvA-RuvB-RuvC complex processes Holliday junction (HJ) DNA during genetic recombination and DNA repair, while the RuvA-RuvB complex plays an important role in the rescue of blocked DNA replication forks via replication fork reversal (RFR). RuvA specifically binds to HJ cruciform DNA, conferring on it an open structure. The RuvB hexamer acts as an ATP-dependent pump, pulling dsDNA into and through the RuvAB complex. RuvB forms 2 homohexamers on either side of HJ DNA bound by 1 or 2 RuvA tetramers; 4 subunits per hexamer contact DNA at a time. Coordinated motions by a converter formed by DNA-disengaged RuvB subunits stimulates ATP hydrolysis and nucleotide exchange. Immobilization of the converter enables RuvB to convert the ATP-contained energy into a lever motion, pulling 2 nucleotides of DNA out of the RuvA tetramer per ATP hydrolyzed, thus driving DNA branch migration. The RuvB motors rotate together with the DNA substrate, which together with the progressing nucleotide cycle form the mechanistic basis for DNA recombination by continuous HJ branch migration. Branch migration allows RuvC to scan DNA until it finds its consensus sequence, where it cleaves and resolves cruciform DNA. The polypeptide is Holliday junction branch migration complex subunit RuvB (Photorhabdus laumondii subsp. laumondii (strain DSM 15139 / CIP 105565 / TT01) (Photorhabdus luminescens subsp. laumondii)).